A 914-amino-acid polypeptide reads, in one-letter code: Translation initiation factor IF-2 (914 aa).

Disordered stretches follow at residues 246-271 (EDGE…KKKG) and 293-313 (SGMD…QRRM). Basic and acidic residues predominate over residues 249 to 266 (EAAKKKAAKPDGGEDVGV). Positions 411–581 (TRPPVVTIMG…LAEAEIRELK (171 aa)) constitute a tr-type G domain. The segment at 420 to 427 (GHVDHGKT) is G1. 420–427 (GHVDHGKT) provides a ligand contact to GTP. Positions 445 to 449 (GITQH) are G2. Positions 467-470 (DTPG) are G3. GTP-binding positions include 467-471 (DTPGH) and 521-524 (NKID). The segment at 521–524 (NKID) is G4. Positions 557–559 (SAK) are G5.

This sequence belongs to the TRAFAC class translation factor GTPase superfamily. Classic translation factor GTPase family. IF-2 subfamily.

It is found in the cytoplasm. One of the essential components for the initiation of protein synthesis. Protects formylmethionyl-tRNA from spontaneous hydrolysis and promotes its binding to the 30S ribosomal subunits. Also involved in the hydrolysis of GTP during the formation of the 70S ribosomal complex. The chain is Translation initiation factor IF-2 from Chlorobaculum tepidum (strain ATCC 49652 / DSM 12025 / NBRC 103806 / TLS) (Chlorobium tepidum).